Reading from the N-terminus, the 321-residue chain is F-box protein At4g35930 (321 aa).

A compositionally biased stretch (basic and acidic residues) spans 1–13 (MGKVSPKDLDSKT). Residues 1–23 (MGKVSPKDLDSKTSVRKKKLKSS) form a disordered region. The region spanning 159–207 (ESQLESLPMDLLVKIVCHLHHDQLKAVFHVSQRIRMATILARQYHFNYT) is the F-box domain. Residues 228 to 258 (WPFRRGDGNPTMVSSPHTPKAPKHAPRPPSR) are disordered.

This chain is F-box protein At4g35930, found in Arabidopsis thaliana (Mouse-ear cress).